The following is a 129-amino-acid chain: Holo-[acyl-carrier-protein] synthase (129 aa).

Residues aspartate 8 and glutamate 60 each coordinate Mg(2+).

It belongs to the P-Pant transferase superfamily. AcpS family. Mg(2+) serves as cofactor.

It localises to the cytoplasm. The catalysed reaction is apo-[ACP] + CoA = holo-[ACP] + adenosine 3',5'-bisphosphate + H(+). In terms of biological role, transfers the 4'-phosphopantetheine moiety from coenzyme A to a Ser of acyl-carrier-protein. This chain is Holo-[acyl-carrier-protein] synthase, found in Anaeromyxobacter sp. (strain Fw109-5).